The chain runs to 152 residues: Ubiquitin-conjugating enzyme E2 N (152 aa).

Positions 3–149 (GLPRRIIKET…ARAWTRLYAM (147 aa)) constitute a UBC core domain. An N6-acetyllysine modification is found at Lys82. The Glycyl thioester intermediate role is filled by Cys87. A Glycyl lysine isopeptide (Lys-Gly) (interchain with G-Cter in ISG15) cross-link involves residue Lys92.

The protein belongs to the ubiquitin-conjugating enzyme family. As to quaternary structure, heterodimer with UBE2V2. Interacts (UBE2V2-UBE2N heterodimer) with the E3 ligase STUB1 (via the U-box domain); the complex has a specific 'Lys-63'-linked polyubiquitination activity. Interacts with RNF8 and RNF168. Interacts with RNF11. Interacts with the E3 ligases, HLTF and SHPRH; the interactions promote the 'Lys-63'-linked polyubiquitination of PCNA upon genotoxic stress and lead to DNA repair. Interacts with ARIH2 (via RING-type 2). Interacts with OTUB1; leading to inhibit E2-conjugating activity. Interacts with RIGI and RNF135; involved in RIGI ubiquitination and activation. In terms of processing, conjugation to ISG15 impairs formation of the thioester bond with ubiquitin but not interaction with UBE2V2.

It carries out the reaction S-ubiquitinyl-[E1 ubiquitin-activating enzyme]-L-cysteine + [E2 ubiquitin-conjugating enzyme]-L-cysteine = [E1 ubiquitin-activating enzyme]-L-cysteine + S-ubiquitinyl-[E2 ubiquitin-conjugating enzyme]-L-cysteine.. It participates in protein modification; protein ubiquitination. Its activity is regulated as follows. Activity is inhibited by binding to OTUB1, which prevents 'Lys-63'-linked polyubiquitination. Its function is as follows. The UBE2V1-UBE2N and UBE2V2-UBE2N heterodimers catalyze the synthesis of non-canonical 'Lys-63'-linked polyubiquitin chains. This type of polyubiquitination does not lead to protein degradation by the proteasome. Mediates transcriptional activation of target genes. Plays a role in the control of progress through the cell cycle and differentiation. Plays a role in the error-free DNA repair pathway and contributes to the survival of cells after DNA damage. Acts together with the E3 ligases, HLTF and SHPRH, in the 'Lys-63'-linked poly-ubiquitination of PCNA upon genotoxic stress, which is required for DNA repair. Appears to act together with E3 ligase RNF5 in the 'Lys-63'-linked polyubiquitination of JKAMP thereby regulating JKAMP function by decreasing its association with components of the proteasome and ERAD. Promotes TRIM5 capsid-specific restriction activity and the UBE2V1-UBE2N heterodimer acts in concert with TRIM5 to generate 'Lys-63'-linked polyubiquitin chains which activate the MAP3K7/TAK1 complex which in turn results in the induction and expression of NF-kappa-B and MAPK-responsive inflammatory genes. Together with RNF135 and UB2V1, catalyzes the viral RNA-dependent 'Lys-63'-linked polyubiquitination of RIGI to activate the downstream signaling pathway that leads to interferon beta production. UBE2V1-UBE2N together with TRAF3IP2 E3 ubiquitin ligase mediate 'Lys-63'-linked polyubiquitination of TRAF6, a component of IL17A-mediated signaling pathway. This chain is Ubiquitin-conjugating enzyme E2 N (UBE2N), found in Macaca fascicularis (Crab-eating macaque).